Consider the following 72-residue polypeptide: Disintegrin basilicin (72 aa).

The 72-residue stretch at A1–A72 folds into the Disintegrin domain. Intrachain disulfides connect C5-C20, C7-C15, C14-C37, C28-C34, C33-C58, and C46-C65. Positions R50–D52 match the Cell attachment site motif.

This sequence belongs to the venom metalloproteinase (M12B) family. P-II subfamily. P-IIa sub-subfamily. Monomer (disintegrin). Expressed by the venom gland.

It is found in the secreted. In terms of biological role, inhibits fibrinogen interaction with platelets. Acts by binding to alpha-IIb/beta-3 (ITGA2B/ITGB3) on the platelet surface and inhibits aggregation induced by ADP, thrombin, platelet-activating factor and collagen. In Crotalus basiliscus (Mexican west-coast rattlesnake), this protein is Disintegrin basilicin.